We begin with the raw amino-acid sequence, 411 residues long: Serine hydroxymethyltransferase (411 aa).

120-122 (GHL) lines the (6S)-5,6,7,8-tetrahydrofolate pocket. Lysine 225 carries the post-translational modification N6-(pyridoxal phosphate)lysine. (6S)-5,6,7,8-tetrahydrofolate contacts are provided by residues glutamate 241 and 350 to 352 (SPF).

Belongs to the SHMT family. Homodimer. Requires pyridoxal 5'-phosphate as cofactor.

The protein localises to the cytoplasm. The catalysed reaction is (6R)-5,10-methylene-5,6,7,8-tetrahydrofolate + glycine + H2O = (6S)-5,6,7,8-tetrahydrofolate + L-serine. The protein operates within one-carbon metabolism; tetrahydrofolate interconversion. Its pathway is amino-acid biosynthesis; glycine biosynthesis; glycine from L-serine: step 1/1. Functionally, catalyzes the reversible interconversion of serine and glycine with tetrahydrofolate (THF) serving as the one-carbon carrier. This reaction serves as the major source of one-carbon groups required for the biosynthesis of purines, thymidylate, methionine, and other important biomolecules. Also exhibits THF-independent aldolase activity toward beta-hydroxyamino acids, producing glycine and aldehydes, via a retro-aldol mechanism. The chain is Serine hydroxymethyltransferase from Limosilactobacillus fermentum (strain NBRC 3956 / LMG 18251) (Lactobacillus fermentum).